A 716-amino-acid polypeptide reads, in one-letter code: MNPITKQFQYGQHTVTLETGVIARQATASVLASIDDTTVLVTVVAKKEAREGQNFFPLTVNYQEKTYAAGKIPGGFFKREGRPSENETLTCRLIDRPIRPLFPDGFMNEVQVVATVVSVNPQINPDIVALIGTSAALSISGVPFAGPIGAARVGVVNDEYVLNPTADELENSKLDLVVAGTDKAVLMVESEAQLLSEDQMLGAVMYGHEAMQDVIKAITEFTAEAGKEKWDWQAPAKDESLQTKIRELAEQGIGEAYRTTDKAERKGKLDQVKEQMVEKLTAEDENVDLEESGKIFHDLESDIVRSRIIAGEKRIDGRDPDMVRAISVATGVLPRTHGSALFTRGETQALVTATLGTDRDAQMIDELTGMNTNRFMLHYNFPPYCVGETGMVGSPKRREIGHGRLAKRGIQAVMPSHDEFPYTIRVVSEITESNGSSSMASVCGSSLALMDAGVPIKSSVAGIAMGLVKEGDKHVVLSDILGDEDHLGDMDFKVAGNTDGITALQMDIKIDGITRDIMESALAQAKSARLHILKVMDEAIGGHREELSTYAPRFTTIKIDQDKIKDVIGKGGAVIRELTESTNTNIEIGDDGTIKVAASDQADADAAIEKIKQLTANVEVGKIYQGKVARIVDFGAFVTVLPGKDGLVHISQIAEERVNDVNEYLKVGDVVPVKVLEIDRQGRVRLSMKEAAEKKEEPAPEAPAEPAAEEENKSEE.

The Mg(2+) site is built by Asp-485 and Asp-491. The KH domain occupies 552 to 611 (PRFTTIKIDQDKIKDVIGKGGAVIRELTESTNTNIEIGDDGTIKVAASDQADADAAIEKI). Residues 621 to 689 (GKIYQGKVAR…RQGRVRLSMK (69 aa)) form the S1 motif domain. A compositionally biased stretch (basic and acidic residues) spans 689–698 (KEAAEKKEEP). Residues 689-716 (KEAAEKKEEPAPEAPAEPAAEEENKSEE) are disordered. Residues 707 to 716 (AAEEENKSEE) are compositionally biased toward acidic residues.

Belongs to the polyribonucleotide nucleotidyltransferase family. As to quaternary structure, component of the RNA degradosome, which is a multiprotein complex involved in RNA processing and mRNA degradation. It depends on Mg(2+) as a cofactor.

The protein resides in the cytoplasm. It catalyses the reaction RNA(n+1) + phosphate = RNA(n) + a ribonucleoside 5'-diphosphate. Functionally, involved in mRNA degradation. Catalyzes the phosphorolysis of single-stranded polyribonucleotides processively in the 3'- to 5'-direction. The protein is Polyribonucleotide nucleotidyltransferase of Idiomarina loihiensis (strain ATCC BAA-735 / DSM 15497 / L2-TR).